The primary structure comprises 529 residues: HTH-type transcriptional activator Btr (529 aa).

The segment at residues 182–201 (LAQLSQMAGISAKHYSESFK) is a DNA-binding region (H-T-H motif). The 261-residue stretch at 268-528 (KIAAYGRGTM…QTVSLLSGDC (261 aa)) folds into the Fe/B12 periplasmic-binding domain.

In terms of assembly, binds with high affinity to both apo-bacillibactin and iron-bacillibactin.

The protein localises to the cytoplasm. In terms of biological role, in iron-limited conditions, activates expression of the feuABCybbA operon, which encodes the bacillibactin uptake system. Acts by binding directly to a conserved direct repeat element upstream of the feuA promoter. Activity is increased in the presence of bacillibactin. This is HTH-type transcriptional activator Btr (btr) from Bacillus subtilis (strain 168).